The primary structure comprises 180 residues: Napin (180 aa).

The N-terminal stretch at 1–21 (MANKLFLVSATLAFFFLLTNA) is a signal peptide. 2 consecutive propeptides follow at residues 22–38 (SIYRTIVEVDEDDATNP) and 75–94 (PSWTLDGEFDFEDDMENPQG).

It belongs to the 2S seed storage albumins family. In terms of assembly, the mature protein consists of a small and a large chain linked by disulfide bonds. In terms of tissue distribution, cotyledons and the axis.

The small, basic, water-soluble napins are one of the two major kinds of storage proteins synthesized in the seed during its maturation. This is Napin (NAP1) from Brassica napus (Rape).